Consider the following 214-residue polypeptide: Small ribosomal subunit protein uS3c (214 aa).

One can recognise a KH type-2 domain in the interval 39–111 (IRTYIHTISK…QLTINVLEVE (73 aa)).

This sequence belongs to the universal ribosomal protein uS3 family. As to quaternary structure, part of the 30S ribosomal subunit.

Its subcellular location is the plastid. It localises to the chloroplast. This chain is Small ribosomal subunit protein uS3c (rps3), found in Phaeodactylum tricornutum (strain CCAP 1055/1).